The sequence spans 392 residues: Histidinol-phosphate aminotransferase (392 aa).

Residues 1 to 24 are disordered; sequence MSAVLKDPIPAPGRPESTRPEPRP. Residue Lys236 is modified to N6-(pyridoxal phosphate)lysine.

The protein belongs to the class-II pyridoxal-phosphate-dependent aminotransferase family. Histidinol-phosphate aminotransferase subfamily. As to quaternary structure, homodimer. Requires pyridoxal 5'-phosphate as cofactor.

It catalyses the reaction L-histidinol phosphate + 2-oxoglutarate = 3-(imidazol-4-yl)-2-oxopropyl phosphate + L-glutamate. It functions in the pathway amino-acid biosynthesis; L-histidine biosynthesis; L-histidine from 5-phospho-alpha-D-ribose 1-diphosphate: step 7/9. The polypeptide is Histidinol-phosphate aminotransferase (Xanthobacter autotrophicus (strain ATCC BAA-1158 / Py2)).